The sequence spans 491 residues: Pentatricopeptide repeat-containing protein At5g27460 (491 aa).

PPR repeat units follow at residues 69–99 (SLSELRLISKRLIRSNRYDLALQMMEWMENQ), 105–139 (SVYDIALRLDLIIKTHGLKQGEEYFEKLLHSSVSM), 142–176 (AKSAYLPLLRAYVKNKMVKEAEALMEKLNGLGFLV), 177–211 (TPHPFNEMMKLYEASGQYEKVVMVVSMMKGNKIPR), 212–246 (NVLSYNLWMNACCEVSGVAAVETVYKEMVGDKSVE), 248–278 (GWSSLCTLANVYIKSGFDEKARLVLEDAEKM), 283–313 (NRLGYFFLITLYASLGNKEGVVRLWEVSKSV), 318–348 (SCVNYICVLSSLVKTGDLEEAERVFSEWEAQ), 353–387 (DVRVSNVLLGAYVRNGEIRKAESLHGCVLERGGTP), and 388–426 (NYKTWEILMEGWVKCENMEKAIDAMHQVFVLMRRCHWRP).

Belongs to the PPR family. P subfamily.

The protein is Pentatricopeptide repeat-containing protein At5g27460 of Arabidopsis thaliana (Mouse-ear cress).